The chain runs to 132 residues: Dormancy-associated protein 1 (132 aa).

The segment at 53–76 (MPAAVSPGTPTTPTTPTTPRKDNV) is disordered. Over residues 61–70 (TPTTPTTPTT) the composition is skewed to low complexity. T64 carries the phosphothreonine modification.

Belongs to the DRM1/ARP family. As to expression, isoform 1: Expressed mainly in the low bolt. Isoform 2: Expressed mainly in the low bolt. Detected in flowers. Isoform 4: Expressed mainly in the low bolt. Isoform 5: Expressed mainly in the 6 days old seedlings. Detected in 16 days old seedlings, axil, low bolt and floral samples, but only barely in leaves and top bolt.

The sequence is that of Dormancy-associated protein 1 from Arabidopsis thaliana (Mouse-ear cress).